Reading from the N-terminus, the 2963-residue chain is tRNA nuclease CdiA (2963 aa).

The signal sequence occupies residues 1–29 (MIPIYLRQKLISYALIYLVAIQPIMPVMA). Residues 35 to 320 (AQGSTALDKA…AQGNITLNSH (286 aa)) are two-partner system transport domain (TPS). The tract at residues 573 to 1074 (GNVVAQEHAQ…MVLNTASLLN (502 aa)) is FHA-1. Residues 1075–1342 (RRDGFSVTEK…KPLTRAQLSD (268 aa)) form a receptor binding domain (RBD) region. The segment at 1343–1528 (YPLPDSNNGL…LAKAEQAHLQ (186 aa)) is YP domain. The periplasmic FHA-1 repeat (pFR) stretch occupies residues 1529-1751 (GSVISGNKVE…ATLQAERDVN (223 aa)). The segment covering 1759–1770 (TRNQHIDSEDKT) has biased composition (basic and acidic residues). Disordered regions lie at residues 1759-1787 (TRNQHIDSEDKTTGYTRSTLSSGGDLTAS) and 1992-2012 (SKSSRQQINQEGSKQSESASA). The interval 1762 to 2314 (QHIDSEDKTT…DSDNYNSIQK (553 aa)) is FHA-2. Residues 1771–1782 (TGYTRSTLSSGG) are compositionally biased toward polar residues. The short motif at 2694–2697 (VEDN) is the VEDN CT cleavage motif element. The C-terminal effector domain (CT) stretch occupies residues 2694–2963 (VEDNNLSFGK…TGRVRNFHPN (270 aa)).

It in the N-terminal section; belongs to the CdiA toxin family. This sequence in the C-terminal section; belongs to the bacterial EndoU family. In terms of assembly, forms a 1:1 complex with cognate immunity protein CdiI.

Its subcellular location is the secreted. The protein resides in the target cell. It localises to the target cell cytoplasm. Its function is as follows. Toxic component of a toxin-immunity protein module, which functions as a cellular contact-dependent growth inhibition (CDI) system. CDI modules allow bacteria to communicate with and inhibit the growth of closely related neighboring bacteria in a contact-dependent fashion. Targeting of the CT domain (residues 2824-2963) in the absence of immunity protein inhibits cell growth and causes tRNA(UUC-Glu) cleavage in the anticodon loop; expression of cognate immunity protein CdiI-43969 neutralizes growth inhibition and tRNA(UUC-Glu) remains intact, whereas non-cognate immunity proteins do not confer protection from the toxic effects. The CdiA protein is thought to be exported from the cell through the central lumen of CdiB, the other half of its two-partner system (TPS). The TPS domain probably remains associated with CdiB while the FHA-1 domain forms an extended filament with the receptor-binding domain (RBD) at its extremity; in the secretion arrested state the C-terminus of the RBD and YP domains form a hairpin-like structure as the FHA-2, PT and CT domains are periplasmic. The YP domain is probably responsible for this arrest at the point where it re-enters the host cell periplasm. Upon binding to a target cell outer membrane receptor a signal is transmitted to activate secretion. The filament elongates slightly, the rest of CdiA is secreted and the FHA-2 domain becomes stably associated with the target cell's outer membrane where it facilitates entry of the toxic CT domain into the target cell periplasm. From there the toxic CT domain is cleaved and gains access to the target cell cytoplasm via an inner membrane protein. This is tRNA nuclease CdiA from Yersinia mollaretii (strain ATCC 43969 / DSM 18520 / CIP 103324 / CNY 7263 / WAIP 204).